Here is a 753-residue protein sequence, read N- to C-terminus: Inactive protein-tyrosine phosphatase egg-5 (753 aa).

Disordered stretches follow at residues T26–N46 and R77–P116. Residues N35–N46 are compositionally biased toward low complexity. The segment covering A84 to L94 has biased composition (basic and acidic residues). In terms of domain architecture, Tyrosine-protein phosphatase spans M408–F661.

This sequence belongs to the protein-tyrosine phosphatase family. As to quaternary structure, part of a complex, consisting of pseudophosphatases egg-3, egg-4, egg-5 and kinase mbk-2; this complex is required for the oocyte-to-zygote transition. Interacts (via tyrosine-protein phosphatase domain) with kinase mbk-2 (via 'Tyr-619' and 'Tyr-621'); mbk-2 tyrosine phosphorylation enhances the interaction.

The protein resides in the cytoplasm. The protein localises to the cell cortex. In terms of biological role, inactive phosphatase which acts redundantly with egg-4 in the oocyte-to-zygote transition. Required for polarized cortical actin cytoskeleton rearrangement in the oocyte before and after fertilization. Together with egg-4, required for the cortical localization of kinase mbk-2 in maturing oocyte until the end of meiosis I. Also required for kinase mbk-2, pseudophosphatase egg-3 and chitin synthase chs-1 localization to cytoplasmic foci after fertilization. This is Inactive protein-tyrosine phosphatase egg-5 from Caenorhabditis elegans.